A 645-amino-acid polypeptide reads, in one-letter code: Acetyl-coenzyme A synthetase (645 aa).

Residues 190-193 and Thr-308 contribute to the CoA site; that span reads RGGR. ATP contacts are provided by residues 384–386, 408–413, Asp-497, and Arg-512; these read GEP and DTWWQT. Ser-520 provides a ligand contact to CoA. Residue Arg-523 coordinates ATP. Residues Val-534, His-536, and Val-539 each contribute to the Mg(2+) site. Lys-606 carries the post-translational modification N6-acetyllysine.

It belongs to the ATP-dependent AMP-binding enzyme family. It depends on Mg(2+) as a cofactor. Acetylated. Deacetylation by the SIR2-homolog deacetylase activates the enzyme.

The catalysed reaction is acetate + ATP + CoA = acetyl-CoA + AMP + diphosphate. Functionally, catalyzes the conversion of acetate into acetyl-CoA (AcCoA), an essential intermediate at the junction of anabolic and catabolic pathways. AcsA undergoes a two-step reaction. In the first half reaction, AcsA combines acetate with ATP to form acetyl-adenylate (AcAMP) intermediate. In the second half reaction, it can then transfer the acetyl group from AcAMP to the sulfhydryl group of CoA, forming the product AcCoA. This is Acetyl-coenzyme A synthetase from Alkalilimnicola ehrlichii (strain ATCC BAA-1101 / DSM 17681 / MLHE-1).